We begin with the raw amino-acid sequence, 111 residues long: Class I hydrophobin 10 (111 aa).

Residues 1–17 (MLFNTFVVTALASLAAA) form the signal peptide. 4 cysteine pairs are disulfide-bonded: Cys30–Cys90, Cys37–Cys84, Cys38–Cys71, and Cys91–Cys104.

This sequence belongs to the fungal hydrophobin family. As to quaternary structure, self-assembles to form functional amyloid fibrils called rodlets. Self-assembly into fibrillar rodlets occurs spontaneously at hydrophobic:hydrophilic interfaces and the rodlets further associate laterally to form amphipathic monolayers.

It localises to the secreted. The protein resides in the cell wall. Aerial growth, conidiation, and dispersal of filamentous fungi in the environment rely upon a capability of their secreting small amphipathic proteins called hydrophobins (HPBs) with low sequence identity. Class I can self-assemble into an outermost layer of rodlet bundles on aerial cell surfaces, conferring cellular hydrophobicity that supports fungal growth, development and dispersal; whereas Class II form highly ordered films at water-air interfaces through intermolecular interactions but contribute nothing to the rodlet structure. The protein is Class I hydrophobin 10 of Pleurotus ostreatus (strain PC15) (Oyster mushroom).